The primary structure comprises 314 residues: Polyadenylate-binding protein-interacting protein 8 (314 aa).

Residues 1 to 47 form a disordered region; sequence MAAITEMATDSNDVINDGGTGDGIEKSTDSKPEIESDDLKPKSKPEY. The span at 23 to 47 shows a compositional bias: basic and acidic residues; that stretch reads GIEKSTDSKPEIESDDLKPKSKPEY. The short motif at 59–69 is the PAM2-like element; that stretch reads KLNPEAKEFFP. Residues 99 to 112 carry the Bipartite nuclear localization signal motif; it reads RRRRNNYNQGRRVR. 2 consecutive RRM domains span residues 128-203 and 225-301; these read RTVY…PSKT and RTIY…PSKT.

Interacts with MPC. As to expression, expressed in cauline leaves, stems, rosette leaves, immature siliques and primary inflorescences but at a low level.

Its subcellular location is the nucleus. In Arabidopsis thaliana (Mouse-ear cress), this protein is Polyadenylate-binding protein-interacting protein 8 (CID8).